A 314-amino-acid chain; its full sequence is MIOREX complex component 8 (314 aa).

The EngB-type G domain occupies 132–312 (TLPEVIFLGG…RYVIFQSCGL (181 aa)). GTP-binding positions include 140–147 (GGTNVGKS), 173–177 (GFTKT), 191–194 (DSPG), 253–256 (TKMD), and 290–292 (SST). Residues Ser147 and Thr175 each coordinate Mg(2+).

Belongs to the TRAFAC class TrmE-Era-EngA-EngB-Septin-like GTPase superfamily. EngB GTPase family. Associates with the mitochondrial ribosome. Mg(2+) is required as a cofactor. Post-translationally, sumoylated upon ethanol stress.

It is found in the mitochondrion. In terms of biological role, component of MIOREX complexes, large expressome-like assemblies of ribosomes with factors involved in all the steps of post-transcriptional gene expression. This chain is MIOREX complex component 8, found in Saccharomyces cerevisiae (strain ATCC 204508 / S288c) (Baker's yeast).